A 500-amino-acid chain; its full sequence is Glycerol kinase (500 aa).

Thr-13 serves as a coordination point for ADP. Positions 13, 14, and 15 each coordinate ATP. Thr-13 serves as a coordination point for sn-glycerol 3-phosphate. Residue Arg-17 coordinates ADP. The sn-glycerol 3-phosphate site is built by Arg-83, Glu-84, and Tyr-135. Residues Arg-83, Glu-84, and Tyr-135 each coordinate glycerol. At His-231 the chain carries Phosphohistidine; by HPr. Asp-245 provides a ligand contact to sn-glycerol 3-phosphate. 2 residues coordinate glycerol: Asp-245 and Gln-246. Positions 267 and 310 each coordinate ADP. Positions 267, 310, 314, and 411 each coordinate ATP. Residues Gly-411 and Asn-415 each contribute to the ADP site.

This sequence belongs to the FGGY kinase family. Homotetramer and homodimer (in equilibrium). The phosphoenolpyruvate-dependent sugar phosphotransferase system (PTS), including enzyme I, and histidine-containing protein (HPr) are required for the phosphorylation, which leads to the activation of the enzyme.

The enzyme catalyses glycerol + ATP = sn-glycerol 3-phosphate + ADP + H(+). It participates in polyol metabolism; glycerol degradation via glycerol kinase pathway; sn-glycerol 3-phosphate from glycerol: step 1/1. Its activity is regulated as follows. Activated by phosphorylation and inhibited by fructose 1,6-bisphosphate (FBP). In terms of biological role, key enzyme in the regulation of glycerol uptake and metabolism. Catalyzes the phosphorylation of glycerol to yield sn-glycerol 3-phosphate. The protein is Glycerol kinase of Oceanobacillus iheyensis (strain DSM 14371 / CIP 107618 / JCM 11309 / KCTC 3954 / HTE831).